Reading from the N-terminus, the 390-residue chain is Tuftelin (390 aa).

2 coiled-coil regions span residues 88–126 and 162–351; these read DKMIHEKNINQLKSEVQYIQEARNCLQKLREDISSKLDR and DTCI…IEKQ. Residues 358-390 are disordered; sequence STQARAKTENPGSIRISKPPSPKPMPVIRVVET.

Belongs to the tuftelin family. Interacts with TFIP11. As to expression, expressed in the epidermis (at protein level). Present in the extracellular enamel and is mainly associated with the crystal component.

The protein localises to the secreted. Involved in the structural organization of the epidermis. Involved in the mineralization and structural organization of enamel. The protein is Tuftelin (TUFT1) of Homo sapiens (Human).